A 386-amino-acid chain; its full sequence is MAENSLSDGGPADSVEAAKNASNTEKLTDQVMQNPQVLAALQERLDNVSHTPSSYIETLPKAVKRRINALKQLQVRCAHIEAKFYEEVHDLERKYAALYQPLFDKRREFITGDVEPTDAESAWHSENEEDDKLAGDMKNKVVIAEKEAAAVEELNPKGIPEFWFTIFRNVDMLSELVQEYDEPILKHLQDIKVKFSDPGQPMSFVLEFHFEPNDYFTNPVLTKTYKMKSEPDKADPFSFEGPEIVDCDGCTIDWKKGKNVTVKTIKKKQKHKGRGTVRTITKQVPNESFFNFFSPLKASGDGESLDEDSEFTLASDFEIGHFFRERIVPRAVLYFTGEAIEDDDNFEEGEEGEEEELEGDEEGEDEDDADVNPKKEPIQPAECKQQ.

Residues 1 to 28 are disordered; sequence MAENSLSDGGPADSVEAAKNASNTEKLT. Ala-2 is subject to N-acetylalanine. Ser-5, Ser-7, and Ser-49 each carry phosphoserine. Thr-51 is subject to Phosphothreonine. Phosphoserine occurs at positions 53 and 54. Thr-58 carries the post-translational modification Phosphothreonine. Position 105 is an N6-acetyllysine (Lys-105). At Ser-125 the chain carries Phosphoserine. An N6-acetyllysine modification is found at Lys-146. A Nuclear localization signal motif is present at residues 265–271; it reads IKKKQKH. Residue Ser-304 is modified to Phosphoserine. Residues 339 to 370 show a composition bias toward acidic residues; the sequence is AIEDDDNFEEGEEGEEEELEGDEEGEDEDDAD. Residues 339–386 form a disordered region; the sequence is AIEDDDNFEEGEEGEEEELEGDEEGEDEDDADVNPKKEPIQPAECKQQ.

This sequence belongs to the nucleosome assembly protein (NAP) family. Interacts with core (H2A, H2B, H3, H4) and linker (H1) histones. In terms of processing, polyglutamylated and polyglycylated. These 2 modifications occur exclusively on glutamate residues and result in either polyglutamate or polyglycine chains on the gamma-carboxyl group. Both modifications can coexist on the same protein on adjacent residues, and lowering polyglycylation levels increases polyglutamylation, and reciprocally. Polyglutamylated by TTLL4. Post-translationally, phosphorylated at the G0/G1 boundary but it is not phosphorylated in S-phase. Phosphorylated protein remains in the cytoplasm in a complex with histones during the G0/G1 transition, whereas dephosphorylation triggers its transport into the nucleus at the G1/S-boundary.

It is found in the nucleus. Its subcellular location is the cytoplasm. Acts as a histone chaperone in nucleosome assembly. This Rattus norvegicus (Rat) protein is Nucleosome assembly protein 1-like 4 (Nap1l4).